Here is a 497-residue protein sequence, read N- to C-terminus: MKRPNFLFVMTDTQATNMVGCYSGKPLNTQNIDSLAAEGIRFNSAYTCSPVCTPARAGLFTGIYANQSGPWTNNVAPGKNISTMGRYFKDAGYHTCYIGKWHLDGHDYFGTGECPPEWDADYWFDGANYLSELTEKEISLWRNGLNSVEDLQANHIDETFTWAHRISNRAVDFLQQPARADEPFLMVVSYDEPHHPFTCPVEYLEKYADFYYELGEKAQDDLANKPEHHRLWAQAMPSPVGDDGLYHHPLYFACNDFVDDQIGRVINALTPEQRENTWVIYTSDHGEMMGAHKLISKGAAMYDDITRIPLIIRSPQGERRQVDTPVSHIDLLPTMMALADIEKPEILPGENILAVKEPRGVMVEFNRYEIEHDSFGGFIPVRCWVTDDFKLVLNLFTSDELYDRRNDPNEMHNLIDDIRFADVRSKMHDALLDYMDKIRDPFRSYQWSLRPWRKDARPRWMGAFRPRPQDGYSPVVRDYDTGLPTQGVKVEEKKQKF.

Residues aspartate 12, threonine 13, and cysteine 52 each coordinate Ca(2+). Catalysis depends on cysteine 52, which acts as the Nucleophile. A 3-oxoalanine (Cys) modification is found at cysteine 52. Histidine 102 is an active-site residue. Ca(2+)-binding residues include aspartate 284 and histidine 285.

Belongs to the sulfatase family. Requires Ca(2+) as cofactor. The conversion to 3-oxoalanine (also known as C-formylglycine, FGly), of a serine or cysteine residue in prokaryotes and of a cysteine residue in eukaryotes, is critical for catalytic activity.

This is an uncharacterized protein from Escherichia coli (strain K12).